The primary structure comprises 450 residues: Phosphoglucosamine mutase (450 aa).

The active-site Phosphoserine intermediate is serine 102. Residues serine 102, aspartate 244, aspartate 246, and aspartate 248 each coordinate Mg(2+). A Phosphoserine modification is found at serine 102.

Belongs to the phosphohexose mutase family. It depends on Mg(2+) as a cofactor. In terms of processing, activated by phosphorylation.

The enzyme catalyses alpha-D-glucosamine 1-phosphate = D-glucosamine 6-phosphate. Functionally, catalyzes the conversion of glucosamine-6-phosphate to glucosamine-1-phosphate. In Desulfovibrio desulfuricans (strain ATCC 27774 / DSM 6949 / MB), this protein is Phosphoglucosamine mutase.